Reading from the N-terminus, the 633-residue chain is Probable potassium transport system protein Kup (633 aa).

The next 12 helical transmembrane spans lie at 19–39, 61–81, 112–132, 148–168, 179–199, 217–237, 258–278, 290–310, 348–368, 380–400, 405–425, and 430–450; these read LGML…SPLY, ILAL…VLFI, VLVI…MITP, SGLE…LFLI, LFGP…INGI, FFIV…LALT, WFAL…ALLL, LLAP…ATVI, IYIG…VLGF, VAVT…MLLL, PVLA…FFAA, and IFQG…LMTT.

The protein belongs to the HAK/KUP transporter (TC 2.A.72) family.

It localises to the cell inner membrane. It carries out the reaction K(+)(in) + H(+)(in) = K(+)(out) + H(+)(out). In terms of biological role, transport of potassium into the cell. Likely operates as a K(+):H(+) symporter. The protein is Probable potassium transport system protein Kup of Pseudomonas fluorescens (strain ATCC BAA-477 / NRRL B-23932 / Pf-5).